A 660-amino-acid polypeptide reads, in one-letter code: Kinesin-like protein KIF22 (660 aa).

The interval 1-31 is disordered; it reads MSLRAKTCPQRREMASATSGPGRCVSKGGLG. The 326-residue stretch at 38–363 folds into the Kinesin motor domain; that stretch reads RVRVAVRLRP…LNFTARSKEV (326 aa). 122–129 contacts ATP; that stretch reads GPTGAGKT. Residues 391–418 are disordered; that stretch reads PSEAKKAKGPEEESTGSPESTAAPASAS. A compositionally biased stretch (low complexity) spans 405-418; sequence TGSPESTAAPASAS. 3 positions are modified to phosphoserine: Ser407, Ser422, and Ser447. A Glycyl lysine isopeptide (Lys-Gly) (interchain with G-Cter in SUMO2) cross-link involves residue Lys460. Residues 460 to 505 adopt a coiled-coil conformation; it reads KRERMVLMKTVEEKNLEIERLKMKQKELEAKVLAQEAPDPREKENT. 2 disordered regions span residues 493–516 and 534–567; these read AQEA…ASYS and IQKQ…VEKD. Residues 505–516 are compositionally biased toward polar residues; it reads TPTILQPPASYS. Residues Ser540 and Ser576 each carry the phosphoserine modification.

Belongs to the TRAFAC class myosin-kinesin ATPase superfamily. Kinesin family. In terms of assembly, interacts with FAM83D and SIAH1. Ubiquitinated; mediated by SIAH1 and leading to its subsequent proteasomal degradation.

The protein resides in the nucleus. The protein localises to the cytoplasm. Its subcellular location is the cytoskeleton. Kinesin family member that is involved in spindle formation and the movements of chromosomes during mitosis and meiosis. Binds to microtubules and to DNA. Plays a role in congression of laterally attached chromosomes in NDC80-depleted cells. The chain is Kinesin-like protein KIF22 (Kif22) from Mus musculus (Mouse).